We begin with the raw amino-acid sequence, 398 residues long: MSNMDPNSVLPKRSFLQHELFSQLHIPGSLAFEAFSCISKFTGALLCWFSHGNLQKEVSKHQWGLTCKSRDSLKHVFEHRNVSVFPFHYVSKDISPGFFGNISKSTIQHFVNEAERLHSCSLLSLAAAMIPSLNVMSANGLALPLGSNDVKLRENIEHRTCPENTEHRTCQVGCEEYSGLSFQKLDWTRQSVEPRTGIEFPMLLKENASRSNSEVLVATGSRTMKIIRIKSLKVYAFGFYVHPSSVCQKLGRKYASVPASKLDKCDDLYKDLLREDIVMSVRLVVNYNGLKINTVRDVFEKSLRARLVKANPKTDFNCLNDFGSFFRQDIPIPAGTIIDFRRTEDGQLITEIGGNLIGAVRSKDLCRAFFGMYIGDVPVSEQTKEEIGRKVVGIIKRC.

Arginine 222, tyrosine 235, and serine 302 together coordinate dodecanoate.

Belongs to the chalcone isomerase family. In terms of tissue distribution, expressed in developing cotyledons, young seedlings, roots, seeds, embryos, macrospores, preanthesis and tapetum. Restricted to developing and reproductive tissues.

Its subcellular location is the plastid. The protein resides in the chloroplast stroma. Functionally, fatty-acid-binding protein. Associates with saturated fatty acid. The protein is Fatty-acid-binding protein 2 (FAP2) of Arabidopsis thaliana (Mouse-ear cress).